A 387-amino-acid polypeptide reads, in one-letter code: Krueppel-like factor 17 (387 aa).

Disordered stretches follow at residues 28–54 (FLDM…IRRV), 213–234 (SRDP…PLES), and 257–277 (RREA…SPVS). Over residues 30–46 (DMSSSPGSGGVHTSWNR) the composition is skewed to polar residues. The span at 257–270 (RREAQNSRAQERAS) shows a compositional bias: basic and acidic residues. 3 C2H2-type zinc fingers span residues 280–304 (YHCE…QRKH), 310–334 (YKCT…TRIH), and 340–362 (HKCD…QRTH). Positions 357 to 387 (QHQRTHMRMPRSPDPQADSGRRAGPLPAPHL) are disordered.

This sequence belongs to the Sp1 C2H2-type zinc-finger protein family.

The protein localises to the nucleus. Its function is as follows. Transcription repressor that binds to the promoter of target genes and prevents their expression. Acts as a negative regulator of epithelial-mesenchymal transition and metastasis in breast cancer. Specifically binds the 5'-CACCC-3' sequence in the promoter of ID1, a key metastasis regulator in breast cancer, and repress its expression. May be a germ cell-specific transcription factor that plays important roles in spermatid differentiation and oocyte development. The chain is Krueppel-like factor 17 (KLF17) from Sus scrofa (Pig).